Consider the following 285-residue polypeptide: NADH-cytochrome b5 reductase 1 (285 aa).

The chain crosses the membrane as a helical span at residues 7 to 23; the sequence is LATFSVLVLFYKLFTYS. Positions 40–144 constitute an FAD-binding FR-type domain; it reads TEFREFELVE…SGPRGFYEYV (105 aa). Residues 124 to 139 and 150 to 182 each bind FAD; these read GDMK…GPRG and HLAM…RVTL.

This sequence belongs to the flavoprotein pyridine nucleotide cytochrome reductase family. As to quaternary structure, monomer. Component of the 2-(3-amino-3-carboxypropyl)histidine synthase complex composed of DPH1, DPH2, DPH3 and a NADH-dependent reductase, predominantly CBR1. Requires FAD as cofactor.

The protein localises to the mitochondrion outer membrane. It carries out the reaction 2 Fe(III)-[cytochrome b5] + NADH = 2 Fe(II)-[cytochrome b5] + NAD(+) + H(+). The catalysed reaction is 2 Fe(3+)-[Dph3] + NADH = 2 Fe(2+)-[Dph3] + NAD(+) + H(+). It participates in protein modification; peptidyl-diphthamide biosynthesis. Its function is as follows. NADH-dependent reductase for DPH3 and cytochrome b5. Required for the first step of diphthamide biosynthesis, a post-translational modification of histidine which occurs in elongation factor 2. DPH1 and DPH2 transfer a 3-amino-3-carboxypropyl (ACP) group from S-adenosyl-L-methionine (SAM) to a histidine residue, the reaction is assisted by a reduction system comprising DPH3 and a NADH-dependent reductase, predominantly CBR1. By reducing DPH3, also involved in the formation of the tRNA wobble base modification mcm5s 2U (5-methoxycarbonylmethyl-2-thiouridine), mediated by the elongator complex. The cytochrome b5/NADH cytochrome b5 reductase electron transfer system supports the catalytic activity of several sterol biosynthetic enzymes. This chain is NADH-cytochrome b5 reductase 1 (CBR1), found in Candida glabrata (strain ATCC 2001 / BCRC 20586 / JCM 3761 / NBRC 0622 / NRRL Y-65 / CBS 138) (Yeast).